A 301-amino-acid polypeptide reads, in one-letter code: Acetylglutamate kinase (301 aa).

Substrate-binding positions include 68 to 69, Arg90, and Asn195; that span reads GG.

It belongs to the acetylglutamate kinase family. ArgB subfamily.

The protein resides in the cytoplasm. The enzyme catalyses N-acetyl-L-glutamate + ATP = N-acetyl-L-glutamyl 5-phosphate + ADP. It participates in amino-acid biosynthesis; L-arginine biosynthesis; N(2)-acetyl-L-ornithine from L-glutamate: step 2/4. Functionally, catalyzes the ATP-dependent phosphorylation of N-acetyl-L-glutamate. The sequence is that of Acetylglutamate kinase from Pseudomonas putida (strain ATCC 700007 / DSM 6899 / JCM 31910 / BCRC 17059 / LMG 24140 / F1).